The chain runs to 1411 residues: Protein RhsB (1411 aa).

A run of 28 repeats spans residues 330-352, 353-374, 375-417, 418-438, 439-460, 461-481, 482-502, 503-525, 526-546, 547-567, 568-588, 589-609, 610-629, 630-650, 651-671, 672-691, 692-711, 712-734, 735-758, 808-828, 829-850, 851-871, 872-894, 895-930, 931-959, 960-984, 985-1019, and 1162-1186. Residues 330-1186 form a 28 X approximate tandem repeats region; the sequence is GKQVRSFTYD…LNEENPHQLQ (857 aa).

This sequence belongs to the RHS family.

Its function is as follows. Rhs elements have a nonessential function. They may play an important role in the natural ecology of the cell. The protein is Protein RhsB (rhsB) of Escherichia coli (strain K12).